Consider the following 139-residue polypeptide: Thioredoxin-like protein Clot (139 aa).

Residues 1–136 enclose the Thioredoxin domain; that stretch reads MTVEKVDATV…LADKVDAVVN (136 aa). Residues C49 and C52 each act as nucleophile in the active site. An intrachain disulfide couples C49 to C52.

This sequence belongs to the thioredoxin family.

In terms of biological role, probable thiol-disulfide oxidoreductase that may participate in various redox reactions. This chain is Thioredoxin-like protein Clot, found in Oryza sativa subsp. japonica (Rice).